We begin with the raw amino-acid sequence, 106 residues long: Phosphoribosyl-ATP pyrophosphatase (106 aa).

It belongs to the PRA-PH family.

The protein localises to the cytoplasm. It carries out the reaction 1-(5-phospho-beta-D-ribosyl)-ATP + H2O = 1-(5-phospho-beta-D-ribosyl)-5'-AMP + diphosphate + H(+). It functions in the pathway amino-acid biosynthesis; L-histidine biosynthesis; L-histidine from 5-phospho-alpha-D-ribose 1-diphosphate: step 2/9. This is Phosphoribosyl-ATP pyrophosphatase from Rhizorhabdus wittichii (strain DSM 6014 / CCUG 31198 / JCM 15750 / NBRC 105917 / EY 4224 / RW1) (Sphingomonas wittichii).